A 1535-amino-acid chain; its full sequence is ABC multidrug transporter atrF (1535 aa).

The interval 1–115 (MADDHRQPEA…DEQASSTDEY (115 aa)) is disordered. The N-linked (GlcNAc...) asparagine glycan is linked to Asn-33. The span at 34-45 (TTSTSETDASAD) shows a compositional bias: low complexity. Basic and acidic residues predominate over residues 46–76 (ADARWGERNQGDPVSRRGAMEEFEEMRREVT). Positions 79-93 (SLHRTRSAKDARRRS) are enriched in basic residues. Asn-149, Asn-274, Asn-287, and Asn-351 each carry an N-linked (GlcNAc...) asparagine glycan. Residues 185-427 (VPALHFGKRP…FVDLGFYCPE (243 aa)) enclose the ABC transporter 1 domain. A run of 7 helical transmembrane segments spans residues 540-560 (LYTK…LFYG), 573-593 (GALF…MPAV), 618-638 (VVVD…IVYF), 646-666 (ASKF…ITSL), 680-700 (AVRF…YVIP), 703-723 (GLID…LSYS), and 791-811 (FGVV…AAEV). The interval 834–868 (KAQNGKGNDEEQVQNTGDNAALSRGEAKSSSSGEA) is disordered. Positions 879-1117 (FTWSNVEYTV…DVIKYFADRG (239 aa)) constitute an ABC transporter 2 domain. Asn-892 carries an N-linked (GlcNAc...) asparagine glycan. 915 to 922 (GASGAGKT) is an ATP binding site. 6 helical membrane passes run 1212–1232 (YGKL…FWML), 1246–1266 (IFLI…KFYI), 1295–1315 (IPMA…PVGF), 1320–1340 (SSAG…ASWG), 1342–1362 (WICA…FFFV), and 1384–1406 (WMYY…FPSV). Asn-1459 carries N-linked (GlcNAc...) asparagine glycosylation. 2 consecutive transmembrane segments (helical) span residues 1477-1497 (CFGI…FFIY) and 1503-1523 (GWSF…EGVK).

It belongs to the ABC transporter superfamily. ABCG family. PDR (TC 3.A.1.205) subfamily.

The protein localises to the cell membrane. It catalyses the reaction voriconazole(in) + ATP + H2O = voriconazole(out) + ADP + phosphate + H(+). In terms of biological role, pleiotropic ABC efflux transporter involved in the basal level of azole susceptibility. Confers resistance to voriconazole. This chain is ABC multidrug transporter atrF, found in Aspergillus flavus (strain ATCC 200026 / FGSC A1120 / IAM 13836 / NRRL 3357 / JCM 12722 / SRRC 167).